Here is a 502-residue protein sequence, read N- to C-terminus: Glycerol kinase (502 aa).

Thr14 is a binding site for ADP. The ATP site is built by Thr14, Thr15, and Ser16. Thr14 serves as a coordination point for sn-glycerol 3-phosphate. ADP is bound at residue Arg18. Arg84, Glu85, and Tyr136 together coordinate sn-glycerol 3-phosphate. The glycerol site is built by Arg84, Glu85, and Tyr136. A Phosphohistidine; by HPr modification is found at His232. Asp246 lines the sn-glycerol 3-phosphate pocket. Residues Asp246 and Gln247 each contribute to the glycerol site. The ADP site is built by Thr268 and Gly311. Residues Thr268, Gly311, Gln315, and Gly412 each coordinate ATP. Gly412 and Asn416 together coordinate ADP.

Belongs to the FGGY kinase family. As to quaternary structure, homotetramer and homodimer (in equilibrium). Post-translationally, the phosphoenolpyruvate-dependent sugar phosphotransferase system (PTS), including enzyme I, and histidine-containing protein (HPr) are required for the phosphorylation, which leads to the activation of the enzyme.

It carries out the reaction glycerol + ATP = sn-glycerol 3-phosphate + ADP + H(+). The protein operates within polyol metabolism; glycerol degradation via glycerol kinase pathway; sn-glycerol 3-phosphate from glycerol: step 1/1. With respect to regulation, activated by phosphorylation and inhibited by fructose 1,6-bisphosphate (FBP). Functionally, key enzyme in the regulation of glycerol uptake and metabolism. Catalyzes the phosphorylation of glycerol to yield sn-glycerol 3-phosphate. This chain is Glycerol kinase, found in Streptococcus pneumoniae serotype 19F (strain G54).